Here is a 242-residue protein sequence, read N- to C-terminus: MGRAFEYRKARKMKRWGNMARVFTKLGKEITIAAKEGGPDVETNPRLRILVQTAKKENMPKENVERAIKKATSKDYTDYKEMNYEGYGPYGIAIFVETATDNTTRTVANVRSYFNKHGGSLGTSGSLEFLFQHKCVFHIVKKDDMDLESLELELIDYGVDELEEDENEIILYGDFSENSNIQKYLEDAGYEIASAEFVRIPNDTKEVTAEQREQIEKLIERIEEDEDVQNVFHNMKEEEGEE.

The protein belongs to the TACO1 family.

Its subcellular location is the cytoplasm. This chain is Probable transcriptional regulatory protein PG_0097, found in Porphyromonas gingivalis (strain ATCC BAA-308 / W83).